The following is a 1485-amino-acid chain: MIERGKFRSLTLVNWNGFFARTFDLDELVTTLSGGNGAGKSTTMAAFVTALIPDLTLLHFRNTTEAGATSGSRDKGLHGKLRAGVCYSTLDVVNSRHQRVVVGVRLQQVAGRDRKVDIKPFTIQGLPTAIQPTEILTELVAERQARVLSLPELKERVEAMEGVQFKQFNSITDYHSLMFDLGVIPKRLRSSADRSKFYRLIEASLYGGISSAITRSLRDYLLPENSGVRKAFQDMEAALRENRMTLEAIRVTQSDRDLFKHLISEATSYVAADYMRHANERRIHLDSALVLRRDLFSSRKQLVTEQYRHVEMSRELAEQSGAESDLETDYQAASDHLNLVQTAMRQQEKIERYQSDLEELTYRLEEQSEVVSEASEQQADNEARAEAAELEVDELKSQLADYQQALDVQQTRAIQYQQALQALERARALCQLPELTADNAEEWLETFHAKEQEATESLLQLEQKLSVADAAHSQFEQAYQLVVNIAGEVSRSEAWQTARELLRDWPSQQHLAERVQPLRMRLSELEQRLRAQQDAERLLQEFCKRQGNAYQPEELEALQRELESQVEELSLSVSDAGERRMAMRQELEQLKLKIQELTARAPVWLAAQDALSQLSEQSGEALEDSRQVTEYMQQLLERERETTVERDEIAASKRAIEAQIERLSQPSGAEDARLIALAERFGGVLLSEIYDDVTIDDAPYFSALYGPSRHGIVVPDLSLVREHLQGLDDCPEDLYLIEGDPQSFDDSVFAVEEHEKAVVVKIADRQWRYSRYPEVPLFGRAARENRLETLYQERDRLAERYATLSFDVQKTQRTHQAFSRFIGSHLAVAFDADPEAEIRLLNTRRGEIERALNAHEDQNQQQRQQFDQAKEGISALNRLIPLVSLLLDETLTDRVEEITEELAEAQEAARYIQQHGVSLTKLEPLLSVLQSDPQQHEQLQESYVLAQNSQRLAKQQAFALTEVVQRRAHFSYTDSAGMLTENSDLNDKLRQRLEQAEAERTRAREQLRQYQSQFTQYSQVLASLKSSYDAKRDMLKELSQELVDIGVPADANAEARARARRDELHAALSTNRSRRNQLEKQLTFCEAEMDSLQKKLRKLERDYHQIREQVVNAKAGWCAVMRMVKDNGVERRLHRRELAYMDGDELRSMSDKALGALRLAVADNEHLRDVLRLSEDPKRPERKIQFYIAVYQHLRERIRQDIIRTDDPVEAIEQMEIELGRLTEELTAREQKLAISSKSVSNIIRKTIHREQNRIRMLNQGLQAVSFGQVKSVRLNVNVREAHATLLDVLSEQQEQHQDLFNSNRLTFSEALAKLYQRLNPQMDMGQRLPQTIGEELLDYRNYLELEVEVYRGADGWLRAESGALSTGEAIGTGMSILVMVVQSWEEESRRLRGKDISPCRLLFLDEAARLDAKSIATLFELCERLEMQLIIAAPENISPEKGTTYKLVRKVFQNHEHVHVVGLRGFANEIPSLPPIAAELQQGG.

34–41 is a binding site for ATP; the sequence is GGNGAGKS. Coiled-coil stretches lie at residues 337-480 and 509-605; these read LNLV…QAYQ and QHLA…PVWL. Positions 666-783 are flexible hinge; the sequence is PSGAEDARLI…EVPLFGRAAR (118 aa). Coiled coils occupy residues 835–915 and 977–1116; these read EAEI…IQQH and GMLT…AKAG.

The protein belongs to the SMC family. MukB subfamily. As to quaternary structure, homodimerization via its hinge domain. Binds to DNA via its C-terminal region. Interacts, and probably forms a ternary complex, with MukE and MukF via its C-terminal region. The complex formation is stimulated by calcium or magnesium. Interacts with tubulin-related protein FtsZ.

The protein resides in the cytoplasm. The protein localises to the nucleoid. Functionally, plays a central role in chromosome condensation, segregation and cell cycle progression. Functions as a homodimer, which is essential for chromosome partition. Involved in negative DNA supercoiling in vivo, and by this means organize and compact chromosomes. May achieve or facilitate chromosome segregation by condensation DNA from both sides of a centrally located replisome during cell division. This Yersinia pseudotuberculosis serotype O:3 (strain YPIII) protein is Chromosome partition protein MukB.